Here is a 165-residue protein sequence, read N- to C-terminus: Large ribosomal subunit protein uL10 (165 aa).

Belongs to the universal ribosomal protein uL10 family. Part of the ribosomal stalk of the 50S ribosomal subunit. The N-terminus interacts with L11 and the large rRNA to form the base of the stalk. The C-terminus forms an elongated spine to which L12 dimers bind in a sequential fashion forming a multimeric L10(L12)X complex.

Forms part of the ribosomal stalk, playing a central role in the interaction of the ribosome with GTP-bound translation factors. This Burkholderia multivorans (strain ATCC 17616 / 249) protein is Large ribosomal subunit protein uL10.